A 98-amino-acid chain; its full sequence is UPF0473 protein LSL_1108 (98 aa).

It belongs to the UPF0473 family.

The protein is UPF0473 protein LSL_1108 of Ligilactobacillus salivarius (strain UCC118) (Lactobacillus salivarius).